A 377-amino-acid chain; its full sequence is Probable G-protein coupled receptor F27E5.8 (377 aa).

Over 1–34 the chain is Extracellular; it reads MSEQDSSSPKYMRFLLGNFTSAEMVTDGNFLIYC. N-linked (GlcNAc...) asparagine glycosylation is present at asparagine 18. The helical transmembrane segment at 35–55 threads the bilayer; the sequence is IEMGLLVIGVLENIFMIGAVF. The Cytoplasmic segment spans residues 56 to 71; sequence STSCLHLNLRILICNC. Residues 72 to 92 form a helical membrane-spanning segment; sequence CLGFILMAVGRAMIAVPLCIA. Residues 93-105 lie on the Extracellular side of the membrane; that stretch reads HLRDVDISSHAWC. The chain crosses the membrane as a helical span at residues 106-126; it reads FIANAVHHSSADSVCLSFVFI. Residues 127–144 are Cytoplasmic-facing; it reads MLERTAGTIWSKDYEKTK. Residues 145–165 traverse the membrane as a helical segment; sequence IHIFPCIFAFLQWFIPMFMIL. Residues 166 to 195 are Extracellular-facing; the sequence is GNFLDRANRMEHFLLYPHLPCQIEYLTPTM. Residues 196–216 form a helical membrane-spanning segment; that stretch reads FMITIFIIVIGFIASVGGITI. Residues 217–251 lie on the Cytoplasmic side of the membrane; sequence VYNKNIKKYNTRDIWFNTVNLSERYQITENIRSTH. Residues 252 to 272 form a helical membrane-spanning segment; the sequence is LLFPLLALMLIFSTLSVSVLI. The Extracellular segment spans residues 273–303; that stretch reads YGGYWVSVMTKEPARFEEVVKWFGRGGEAAQ. A helical membrane pass occupies residues 304-324; it reads LFDIITAIYTISFPICAFICH. The Cytoplasmic portion of the chain corresponds to 325–377; sequence PNLFRFLRKFIGWNSYAVRPSNLNEIGGFEMSTAPIRTQTEFHFQELSRQWNT.

This sequence belongs to the G-protein coupled receptor 1 family.

It is found in the cell membrane. This Caenorhabditis elegans protein is Probable G-protein coupled receptor F27E5.8.